Reading from the N-terminus, the 49-residue chain is MGKRKANHTISGMNAASAQGQGTGYNEEFANEPLTPAERQNNKKRKKNQ.

Residues 1-49 (MGKRKANHTISGMNAASAQGQGTGYNEEFANEPLTPAERQNNKKRKKNQ) are disordered. Residues 8 to 20 (HTISGMNAASAQG) are compositionally biased toward polar residues.

Belongs to the SspO family.

The protein resides in the spore core. This is Small, acid-soluble spore protein O from Bacillus cereus (strain B4264).